Here is a 1482-residue protein sequence, read N- to C-terminus: Type VII secretion system protein EssC (1482 aa).

Residues 1-229 (MHKLIIKYNK…RPPQPIQKNN (229 aa)) are Cytoplasmic-facing. Residues 230-252 (TVIWRSIIPPLVMIALTVVIFLV) traverse the membrane as a helical segment. Topologically, residues 253 to 256 (RPIG) are extracellular. The chain crosses the membrane as a helical span at residues 257-279 (IYILMMIGMSTVTIVFGITTYFS). Residues 280-1482 (EKKKYNKDVE…EYQKIKLMEG (1203 aa)) lie on the Cytoplasmic side of the membrane. 2 FtsK domains span residues 652-846 (DDIL…QDSN) and 997-1183 (QGPM…NELT). ATP contacts are provided by residues 672–679 (GTTGSGKS) and 1014–1021 (GSPGYGRT).

It belongs to the EssC family. As to quaternary structure, homooligomer. Interacts with EsaE.

It is found in the cell membrane. In terms of biological role, component of the type VII secretion system (Ess). Required for the secretion of substrates including EsxA and EsxB. However, unable to support secretion of the substrate protein EsxC. In Staphylococcus aureus (strain MRSA252), this protein is Type VII secretion system protein EssC.